We begin with the raw amino-acid sequence, 84 residues long: Large ribosomal subunit protein uL23 (84 aa).

Belongs to the universal ribosomal protein uL23 family. Part of the 50S ribosomal subunit. Contacts protein L29.

In terms of biological role, binds to 23S rRNA. One of the proteins that surrounds the polypeptide exit tunnel on the outside of the ribosome. This Haloquadratum walsbyi (strain DSM 16790 / HBSQ001) protein is Large ribosomal subunit protein uL23.